The chain runs to 125 residues: MEYQFTHSIHGVVAKCSMDHEAFARWLNAEITENPSQLAPIFAEIEKCRAAFPNHYECVFEGREYSLYFDYDEVMAKANNLDAAFDDEEMEEGFQFYNEESIAFCGLDDFEKFLKAYQHFVQTYH.

It belongs to the UPF0231 family.

The chain is UPF0231 protein in hemN 3'region from Mannheimia haemolytica (Pasteurella haemolytica).